A 736-amino-acid polypeptide reads, in one-letter code: Phosphoribosylformylglycinamidine synthase subunit PurL (736 aa).

Residue histidine 49 is part of the active site. ATP is bound by residues tyrosine 52 and lysine 91. Position 93 (glutamate 93) interacts with Mg(2+). Substrate contacts are provided by residues 94-97 and arginine 116; that span reads SHNH. The active-site Proton acceptor is histidine 95. Aspartate 117 serves as a coordination point for Mg(2+). Residue glutamine 240 coordinates substrate. Aspartate 268 is a binding site for Mg(2+). 312-314 serves as a coordination point for substrate; the sequence is ESQ. ATP is bound by residues aspartate 493 and glycine 530. A Mg(2+)-binding site is contributed by asparagine 531. Serine 533 is a binding site for substrate.

The protein belongs to the FGAMS family. In terms of assembly, monomer. Part of the FGAM synthase complex composed of 1 PurL, 1 PurQ and 2 PurS subunits.

The protein localises to the cytoplasm. The enzyme catalyses N(2)-formyl-N(1)-(5-phospho-beta-D-ribosyl)glycinamide + L-glutamine + ATP + H2O = 2-formamido-N(1)-(5-O-phospho-beta-D-ribosyl)acetamidine + L-glutamate + ADP + phosphate + H(+). It functions in the pathway purine metabolism; IMP biosynthesis via de novo pathway; 5-amino-1-(5-phospho-D-ribosyl)imidazole from N(2)-formyl-N(1)-(5-phospho-D-ribosyl)glycinamide: step 1/2. Part of the phosphoribosylformylglycinamidine synthase complex involved in the purines biosynthetic pathway. Catalyzes the ATP-dependent conversion of formylglycinamide ribonucleotide (FGAR) and glutamine to yield formylglycinamidine ribonucleotide (FGAM) and glutamate. The FGAM synthase complex is composed of three subunits. PurQ produces an ammonia molecule by converting glutamine to glutamate. PurL transfers the ammonia molecule to FGAR to form FGAM in an ATP-dependent manner. PurS interacts with PurQ and PurL and is thought to assist in the transfer of the ammonia molecule from PurQ to PurL. The polypeptide is Phosphoribosylformylglycinamidine synthase subunit PurL (Rhodopseudomonas palustris (strain ATCC BAA-98 / CGA009)).